The chain runs to 179 residues: Peptide deformylase 2 (179 aa).

The Fe cation site is built by cysteine 102 and histidine 144. Glutamate 145 is an active-site residue. A Fe cation-binding site is contributed by histidine 148.

The protein belongs to the polypeptide deformylase family. The cofactor is Fe(2+).

It carries out the reaction N-terminal N-formyl-L-methionyl-[peptide] + H2O = N-terminal L-methionyl-[peptide] + formate. Removes the formyl group from the N-terminal Met of newly synthesized proteins. Requires at least a dipeptide for an efficient rate of reaction. N-terminal L-methionine is a prerequisite for activity but the enzyme has broad specificity at other positions. This is Peptide deformylase 2 from Nostoc sp. (strain PCC 7120 / SAG 25.82 / UTEX 2576).